Here is a 437-residue protein sequence, read N- to C-terminus: Nicotinate phosphoribosyltransferase (437 aa).

His231 carries the post-translational modification Phosphohistidine; by autocatalysis.

This sequence belongs to the NAPRTase family. In terms of processing, transiently phosphorylated on a His residue during the reaction cycle. Phosphorylation strongly increases the affinity for substrates and increases the rate of nicotinate D-ribonucleotide production. Dephosphorylation regenerates the low-affinity form of the enzyme, leading to product release.

The enzyme catalyses nicotinate + 5-phospho-alpha-D-ribose 1-diphosphate + ATP + H2O = nicotinate beta-D-ribonucleotide + ADP + phosphate + diphosphate. The protein operates within cofactor biosynthesis; NAD(+) biosynthesis; nicotinate D-ribonucleotide from nicotinate: step 1/1. Functionally, catalyzes the synthesis of beta-nicotinate D-ribonucleotide from nicotinate and 5-phospho-D-ribose 1-phosphate at the expense of ATP. This chain is Nicotinate phosphoribosyltransferase, found in Vibrio vulnificus (strain CMCP6).